The following is a 477-amino-acid chain: P3 protein (477 aa).

Positions 1-21 (MVLMQDKGSSQQWPGLGGEGG) are disordered. A run of 8 helical transmembrane segments spans residues 225–245 (PMLL…FLMA), 253–273 (ALAL…SYLF), 281–301 (VTLA…FLPL), 320–340 (ISKI…GVLI), 361–381 (VLLL…LAGI), 383–403 (LPIV…GYCL), 417–437 (VSIE…QLSL), and 450–470 (FIVA…HFIY).

The protein belongs to the bile acid:sodium symporter (BASS) (TC 2.A.28) family.

The protein localises to the membrane. The ubiquitous expression and the conservation of the sequence in distant animal species suggest that the gene codes for a protein with housekeeping functions. The sequence is that of P3 protein (SLC10A3) from Homo sapiens (Human).